The chain runs to 740 residues: Leucine-rich repeat neuronal protein 4 (740 aa).

Positions 1-18 (MRQTLPLLLLTVLRPSWA) are cleaved as a signal peptide. Topologically, residues 19 to 679 (DPPQEKVPLF…PCAAFTTKPS (661 aa)) are extracellular. Asn42 carries N-linked (GlcNAc...) asparagine glycosylation. LRR repeat units follow at residues 51–74 (LPAADATALTLANRNLERLPGCLP), 75–97 (RTLRSLDASHNLLRALSTSELGH), 98–123 (LEQLQVLTLRHNRIAALRWGPGGPAG), 125–144 (HTLDLSYNQLAALPPCTGPA), 145–168 (LSSLRALALAGNPLRALQPRAFAC), 174–197 (LLNLSCTALGRGAQGGIAEAAFAG), 203–226 (LVTLEVLDLSGTFLERVESGWIRD), 228–251 (PKLTSLYLRKMPRLTTLEGDIFKM), 253–276 (PNLQQLDCQDSPALASVATHIFQD), and 277–300 (TPHLQVLLFQNCNLSSFPPWTLDS). A glycan (N-linked (GlcNAc...) asparagine) is linked at Asn176. N-linked (GlcNAc...) asparagine glycosylation is found at Asn289, Asn379, and Asn442. Residues 389–517 (VAPSAAPATR…QAPNPSLSEG (129 aa)) are disordered. 2 stretches are compositionally biased toward polar residues: residues 430-454 (APSTTNSVAGHSNSSVFPRAASTTR) and 490-514 (WDRSISSPQPGQRTHATPQAPNPSL). The Fibronectin type-III domain occupies 579–679 (IPDPPRLQGV…PCAAFTTKPS (101 aa)). N-linked (GlcNAc...) asparagine glycosylation is present at Asn622. The chain crosses the membrane as a helical span at residues 680 to 700 (FALLLSGLCAASGLLLASTVV). Residues 701-740 (LSACLCRRGQTLGLQRCDTHLVAYKNPAFDDYPLGLQTVS) lie on the Cytoplasmic side of the membrane.

It is found in the membrane. Its function is as follows. May play an important role in hippocampus-dependent long-lasting memory. This chain is Leucine-rich repeat neuronal protein 4 (LRRN4), found in Homo sapiens (Human).